A 357-amino-acid polypeptide reads, in one-letter code: Cyclin-Y (357 aa).

Over residues methionine 1–serine 13 the composition is skewed to polar residues. The segment at methionine 1–aspartate 23 is disordered. The Cyclin N-terminal domain maps to proline 186–isoleucine 284.

This sequence belongs to the cyclin family. Interacts with pct-1; the interaction is required to activate pct-1.

The protein localises to the cytoplasm. It localises to the cell projection. Its subcellular location is the dendrite. It is found in the axon. Functionally, in association with pct-1, regulates the trafficking of synaptic vesicle precursors in DA motor neurons by promoting anterograde trafficking to the axon and preventing dynein-dependent trafficking to the dendrite. May also regulate synaptic vesicle trafficking in DD motor neurons and in RIA interneurons. Involved in synapse formation during DD motor neuron remodeling by disassembling ventral presynaptic structures. May activate cdk-5. This is Cyclin-Y from Caenorhabditis elegans.